The chain runs to 150 residues: Large ribosomal subunit protein bL9 (150 aa).

It belongs to the bacterial ribosomal protein bL9 family.

Its function is as follows. Binds to the 23S rRNA. This Paracidovorax citrulli (strain AAC00-1) (Acidovorax citrulli) protein is Large ribosomal subunit protein bL9.